We begin with the raw amino-acid sequence, 79 residues long: UPF0291 protein BH2353 (79 aa).

Residues 57-79 (GAGNDVTPDKLKQSKNKYRNDIH) are disordered. Positions 63 to 79 (TPDKLKQSKNKYRNDIH) are enriched in basic and acidic residues.

It belongs to the UPF0291 family.

Its subcellular location is the cytoplasm. This Halalkalibacterium halodurans (strain ATCC BAA-125 / DSM 18197 / FERM 7344 / JCM 9153 / C-125) (Bacillus halodurans) protein is UPF0291 protein BH2353.